Consider the following 447-residue polypeptide: Acidic leucine-rich nuclear phosphoprotein 32-related protein (447 aa).

LRR repeat units lie at residues 49–70 (NLQH…PRLG), 71–90 (NLQK…EFLV), and 96–117 (SFCD…APLA). The LRRCT domain maps to 129–167 (CPVTRLKDYRSRVFGLIKTLKYLDKTDAEGNERPESDDE). Residues 155-447 (DAEGNERPES…EDDDDDDEER (293 aa)) are disordered. 2 stretches are compositionally biased toward acidic residues: residues 163-194 (ESDD…EIDG) and 215-231 (VDVD…DESE). Residues 232–242 (QATGVNGTSYR) show a composition bias toward polar residues. Composition is skewed to acidic residues over residues 256–277 (VRED…DNDV), 284–309 (EDSE…EEVD), 336–374 (GDDD…EESG), 397–415 (PINE…DDLP), and 433–447 (DDDD…DEER).

The protein belongs to the ANP32 family.

The chain is Acidic leucine-rich nuclear phosphoprotein 32-related protein from Arabidopsis thaliana (Mouse-ear cress).